The sequence spans 135 residues: Small ribosomal subunit protein uS11 (135 aa).

The protein belongs to the universal ribosomal protein uS11 family. Part of the 30S ribosomal subunit. Interacts with proteins S7 and S18. Binds to IF-3.

Its function is as follows. Located on the platform of the 30S subunit, it bridges several disparate RNA helices of the 16S rRNA. Forms part of the Shine-Dalgarno cleft in the 70S ribosome. This Protochlamydia amoebophila (strain UWE25) protein is Small ribosomal subunit protein uS11.